A 199-amino-acid polypeptide reads, in one-letter code: Cytochrome c oxidase assembly protein CtaG (199 aa).

Residues 1 to 12 (MTNTPQTPPKER) are Cytoplasmic-facing. A helical; Signal-anchor for type II membrane protein membrane pass occupies residues 13–35 (ANGVIVGACLAFVAGMVGMAYAA). Topologically, residues 36–199 (VPLYDMFCRV…VKDGETENRL (164 aa)) are periplasmic.

Belongs to the COX11/CtaG family.

The protein resides in the cell inner membrane. Exerts its effect at some terminal stage of cytochrome c oxidase synthesis, probably by being involved in the insertion of the copper B into subunit I. The chain is Cytochrome c oxidase assembly protein CtaG from Sinorhizobium fredii (strain NBRC 101917 / NGR234).